The chain runs to 120 residues: Large ribosomal subunit protein eL8 (120 aa).

This sequence belongs to the eukaryotic ribosomal protein eL8 family. Part of the 50S ribosomal subunit. Probably part of the RNase P complex.

Its subcellular location is the cytoplasm. Functionally, multifunctional RNA-binding protein that recognizes the K-turn motif in ribosomal RNA, the RNA component of RNase P, box H/ACA, box C/D and box C'/D' sRNAs. This chain is Large ribosomal subunit protein eL8, found in Haloquadratum walsbyi (strain DSM 16790 / HBSQ001).